The following is a 356-amino-acid chain: Ornithine cyclodeaminase (356 aa).

Positions 53 and 77 each coordinate L-ornithine. NAD(+) contacts are provided by residues T92, R120, 147-148, D169, T209, 232-235, K239, and S300; these read AQ and VGGD. R120 contacts L-ornithine. D235 lines the L-ornithine pocket. Catalysis depends on D235, which acts as the Proton donor/acceptor. V301 contacts L-ornithine.

It belongs to the ornithine cyclodeaminase/mu-crystallin family. The cofactor is NAD(+).

The enzyme catalyses L-ornithine = L-proline + NH4(+). Its pathway is amino-acid biosynthesis; L-proline biosynthesis; L-proline from L-ornithine: step 1/1. Its activity is regulated as follows. Is inhibited by L-proline and L-lysine. Is not activated by small concentrations of L-arginine, and is even inhibited by about 50% at 0.5 mM L-arginine. Catalyzes the conversion of L-ornithine into L-proline with release of ammonia. Is involved in the utilization of octopine, a catabolic pathway that proceeds through L-arginine and L-ornithine to L-proline. Octopine is a predominant opine in plant cells transformed with Ti plasmid pTiAch5. This is Ornithine cyclodeaminase from Agrobacterium tumefaciens (strain Ach5).